We begin with the raw amino-acid sequence, 335 residues long: 2,4-dienoyl-CoA reductase [(3E)-enoyl-CoA-producing], mitochondrial (335 aa).

The N-terminal 34 residues, 1 to 34, are a transit peptide targeting the mitochondrion; sequence MALLGRAFFAGVSRLPCDPGPQRFFSFGTKTLYQ. Lys42 and Lys49 each carry N6-acetyllysine; alternate. N6-succinyllysine; alternate occurs at positions 42 and 49. NADP(+) is bound at residue 66-71; the sequence is GGGTGL. Thr69 carries the phosphothreonine modification. An N6-succinyllysine modification is found at Lys73. Residue Arg91 coordinates NADP(+). Arg91 contacts substrate. An N6-acetyllysine; alternate mark is found at Lys97 and Lys106. An N6-succinyllysine; alternate mark is found at Lys97 and Lys106. Asp117 contacts NADP(+). Positions 119 and 149 each coordinate substrate. Tyr199 (proton acceptor) is an active-site residue. Residues Lys214 and 240-243 contribute to the NADP(+) site; that span reads PGPI. An N6-acetyllysine; alternate modification is found at Lys244. Lys244 carries the post-translational modification N6-succinyllysine; alternate. Arg251 is a substrate binding site. N6-acetyllysine; alternate is present on Lys260. Lys260 is subject to N6-succinyllysine; alternate. Lys315 carries the post-translational modification N6-acetyllysine. Lys319 carries the N6-acetyllysine; alternate modification. Lys319 is modified (N6-succinyllysine; alternate).

It belongs to the short-chain dehydrogenases/reductases (SDR) family. 2,4-dienoyl-CoA reductase subfamily. In terms of assembly, homotetramer.

The protein resides in the mitochondrion. It carries out the reaction a (2E,4E)-dienoyl-CoA + NADPH + H(+) = a 4,5-saturated-(3E)-enoyl-CoA + NADP(+). The catalysed reaction is a (2E,4Z)-dienoyl-CoA + NADPH + H(+) = a 4,5-saturated-(3E)-enoyl-CoA + NADP(+). It catalyses the reaction (2E,4E)-hexadienoyl-CoA + NADPH + H(+) = (3E)-hexenoyl-CoA + NADP(+). In terms of biological role, auxiliary enzyme of beta-oxidation. It participates in the metabolism of unsaturated fatty enoyl-CoA esters having double bonds in both even- and odd-numbered positions in mitochondria. Catalyzes the NADP-dependent reduction of 2,4-dienoyl-CoA to yield trans-3-enoyl-CoA. This Mus musculus (Mouse) protein is 2,4-dienoyl-CoA reductase [(3E)-enoyl-CoA-producing], mitochondrial (Decr1).